The primary structure comprises 76 residues: Small ribosomal subunit protein bS18 (76 aa).

It belongs to the bacterial ribosomal protein bS18 family. Part of the 30S ribosomal subunit. Forms a tight heterodimer with protein bS6.

In terms of biological role, binds as a heterodimer with protein bS6 to the central domain of the 16S rRNA, where it helps stabilize the platform of the 30S subunit. This chain is Small ribosomal subunit protein bS18, found in Pseudomonas aeruginosa (strain LESB58).